Reading from the N-terminus, the 259-residue chain is Imidazole glycerol phosphate synthase subunit HisF (259 aa).

Active-site residues include D11 and D130.

This sequence belongs to the HisA/HisF family. As to quaternary structure, heterodimer of HisH and HisF.

The protein localises to the cytoplasm. The enzyme catalyses 5-[(5-phospho-1-deoxy-D-ribulos-1-ylimino)methylamino]-1-(5-phospho-beta-D-ribosyl)imidazole-4-carboxamide + L-glutamine = D-erythro-1-(imidazol-4-yl)glycerol 3-phosphate + 5-amino-1-(5-phospho-beta-D-ribosyl)imidazole-4-carboxamide + L-glutamate + H(+). Its pathway is amino-acid biosynthesis; L-histidine biosynthesis; L-histidine from 5-phospho-alpha-D-ribose 1-diphosphate: step 5/9. In terms of biological role, IGPS catalyzes the conversion of PRFAR and glutamine to IGP, AICAR and glutamate. The HisF subunit catalyzes the cyclization activity that produces IGP and AICAR from PRFAR using the ammonia provided by the HisH subunit. This is Imidazole glycerol phosphate synthase subunit HisF from Lactococcus lactis subsp. cremoris (strain SK11).